The following is a 395-amino-acid chain: Peptide-N(4)-(N-acetyl-beta-glucosaminyl)asparagine amidase (395 aa).

Residues C131, C134, C172, and C175 each coordinate Zn(2+). C198 acts as the Nucleophile in catalysis. Active-site residues include H232 and D249. Position 252 (E252) interacts with substrate. Residues 363–395 (PELTKTTPSTDLPSGRQSGSTEWTKSRGENGES) are disordered. Polar residues predominate over residues 366–385 (TKTTPSTDLPSGRQSGSTEW). The segment covering 386–395 (TKSRGENGES) has biased composition (basic and acidic residues).

The protein belongs to the transglutaminase-like superfamily. PNGase family. Zn(2+) serves as cofactor.

It is found in the cytoplasm. The catalysed reaction is Hydrolysis of an N(4)-(acetyl-beta-D-glucosaminyl)asparagine residue in which the glucosamine residue may be further glycosylated, to yield a (substituted) N-acetyl-beta-D-glucosaminylamine and a peptide containing an aspartate residue.. In terms of biological role, specifically deglycosylates the denatured form of N-linked glycoproteins in the cytoplasm and assists their proteasome-mediated degradation. Cleaves the beta-aspartyl-glucosamine (GlcNAc) of the glycan and the amide side chain of Asn, converting Asn to Asp. Prefers proteins containing high-mannose over those bearing complex type oligosaccharides. Can recognize misfolded proteins in the endoplasmic reticulum that are exported to the cytosol to be destroyed and deglycosylate them, while it has no activity toward native proteins. Deglycosylation is a prerequisite for subsequent proteasome-mediated degradation of some, but not all, misfolded glycoproteins. The protein is Peptide-N(4)-(N-acetyl-beta-glucosaminyl)asparagine amidase (PNG1) of Candida albicans (strain SC5314 / ATCC MYA-2876) (Yeast).